Consider the following 300-residue polypeptide: Nicotinate-nucleotide pyrophosphorylase [carboxylating] (300 aa).

The interval Q5–K9 is important for hexamer formation. Quinolinate contacts are provided by residues R107, R150–K151, H172–R173, K183, E213, D234, S260–G262, and G282.

It belongs to the NadC/ModD family. As to quaternary structure, hexamer formed by 3 homodimers.

It catalyses the reaction nicotinate beta-D-ribonucleotide + CO2 + diphosphate = quinolinate + 5-phospho-alpha-D-ribose 1-diphosphate + 2 H(+). It participates in cofactor biosynthesis; NAD(+) biosynthesis; nicotinate D-ribonucleotide from quinolinate: step 1/1. Involved in the catabolism of quinolinic acid (QA). The sequence is that of Nicotinate-nucleotide pyrophosphorylase [carboxylating] (qprt) from Dictyostelium discoideum (Social amoeba).